The following is an 882-amino-acid chain: Serine/threonine-protein kinase greatwall (882 aa).

An N-acetylmethionine modification is found at methionine 1. Residues 35–838 (FTIVKPISRG…MKELKRHHLF (804 aa)) enclose the Protein kinase domain. Residues 41 to 49 (ISRGAFGKV) and lysine 62 contribute to the ATP site. Catalysis depends on aspartate 156, which acts as the Proton acceptor. Phosphothreonine is present on residues threonine 207 and threonine 222. A phosphoserine mark is found at serine 293, serine 371, and serine 454. Threonine 521 is subject to Phosphothreonine. Serine 554, serine 558, serine 633, serine 660, and serine 671 each carry phosphoserine. Residues 713–736 (TPNQVKSGTPYRTPKSVRRGAAPV) form a disordered region. Threonine 725 bears the Phosphothreonine mark. Serine 728 carries the post-translational modification Phosphoserine. Position 744 is a phosphothreonine; by CDK1 (threonine 744). One can recognise an AGC-kinase C-terminal domain in the interval 839–882 (SDVDWENLQHQTMPFIPQPDDETDTSYFEARNNAQHLTISGFSL). Residues serine 878 and serine 881 each carry the phosphoserine modification.

This sequence belongs to the protein kinase superfamily. AGC Ser/Thr protein kinase family. In terms of processing, phosphorylation at Thr-744 by CDK1 during M phase activates its kinase activity. Maximum phosphorylation occurs in prometaphase.

It is found in the cytoplasm. Its subcellular location is the cytoskeleton. It localises to the microtubule organizing center. The protein resides in the centrosome. The protein localises to the nucleus. It catalyses the reaction L-seryl-[protein] + ATP = O-phospho-L-seryl-[protein] + ADP + H(+). The catalysed reaction is L-threonyl-[protein] + ATP = O-phospho-L-threonyl-[protein] + ADP + H(+). Functionally, serine/threonine kinase that plays a key role in M phase by acting as a regulator of mitosis entry and maintenance. Acts by promoting the inactivation of protein phosphatase 2A (PP2A) during M phase: does not directly inhibit PP2A but acts by mediating phosphorylation and subsequent activation of ARPP19 and ENSA at 'Ser-62' and 'Ser-67', respectively. ARPP19 and ENSA are phosphatase inhibitors that specifically inhibit the PPP2R2D (PR55-delta) subunit of PP2A. Inactivation of PP2A during M phase is essential to keep cyclin-B1-CDK1 activity high. Following DNA damage, it is also involved in checkpoint recovery by being inhibited. This chain is Serine/threonine-protein kinase greatwall (MASTL), found in Ailuropoda melanoleuca (Giant panda).